The chain runs to 250 residues: tRNA (guanine-N(1)-)-methyltransferase (250 aa).

Residues Gly116 and 136–141 (IGDYVL) each bind S-adenosyl-L-methionine.

It belongs to the RNA methyltransferase TrmD family. Homodimer.

It localises to the cytoplasm. The enzyme catalyses guanosine(37) in tRNA + S-adenosyl-L-methionine = N(1)-methylguanosine(37) in tRNA + S-adenosyl-L-homocysteine + H(+). Specifically methylates guanosine-37 in various tRNAs. The chain is tRNA (guanine-N(1)-)-methyltransferase from Pseudomonas entomophila (strain L48).